The following is a 108-amino-acid chain: UPF0060 membrane protein BH2744 (108 aa).

The next 4 helical transmembrane spans lie at 6 to 26 (TLFLLAGLAEIGGGYLIWLWL), 31 to 51 (PVYLGLFGAVALALYGVIATF), 60 to 80 (VYAAYGGVFIFLAVLWGWWID), and 86 to 106 (TYDWIGAVICLVGVGIMLWAP).

This sequence belongs to the UPF0060 family.

It localises to the cell membrane. This Halalkalibacterium halodurans (strain ATCC BAA-125 / DSM 18197 / FERM 7344 / JCM 9153 / C-125) (Bacillus halodurans) protein is UPF0060 membrane protein BH2744.